Consider the following 880-residue polypeptide: Nonsense-mediated mRNA decay factor SMG7-like (880 aa).

2 TPR repeats span residues 149–183 (QEQYLKAHEHPNWSTAATYYLEAAKSWPDSGNPHN) and 184–217 (QLAVLATYVSDELLALYHCVRSLAVKEPFPGASN). Positions 669 to 711 (RLGLSKPNGLGPIDETGPVSAFDSLSINSSTEHPASSYSPPTP) are disordered. Polar residues predominate over residues 691 to 701 (DSLSINSSTEH).

In terms of biological role, may play a role in growth and development. The polypeptide is Nonsense-mediated mRNA decay factor SMG7-like (Arabidopsis thaliana (Mouse-ear cress)).